The primary structure comprises 377 residues: GTP 3',8-cyclase (377 aa).

Residues methionine 1 to histidine 29 are disordered. In terms of domain architecture, Radical SAM core spans arginine 45–arginine 271. Arginine 54 serves as a coordination point for GTP. Residues cysteine 61 and cysteine 65 each coordinate [4Fe-4S] cluster. Tyrosine 67 serves as a coordination point for S-adenosyl-L-methionine. [4Fe-4S] cluster is bound at residue cysteine 68. Position 105 (arginine 105) interacts with GTP. Glycine 109 is a binding site for S-adenosyl-L-methionine. Threonine 140 contacts GTP. Serine 164 is a binding site for S-adenosyl-L-methionine. Lysine 201 lines the GTP pocket. An S-adenosyl-L-methionine-binding site is contributed by methionine 235. The [4Fe-4S] cluster site is built by cysteine 304 and cysteine 307. GTP is bound at residue arginine 309–arginine 311. Residue cysteine 321 participates in [4Fe-4S] cluster binding.

This sequence belongs to the radical SAM superfamily. MoaA family. In terms of assembly, monomer and homodimer. [4Fe-4S] cluster serves as cofactor.

It catalyses the reaction GTP + AH2 + S-adenosyl-L-methionine = (8S)-3',8-cyclo-7,8-dihydroguanosine 5'-triphosphate + 5'-deoxyadenosine + L-methionine + A + H(+). It participates in cofactor biosynthesis; molybdopterin biosynthesis. In terms of biological role, catalyzes the cyclization of GTP to (8S)-3',8-cyclo-7,8-dihydroguanosine 5'-triphosphate. In Corynebacterium glutamicum (strain R), this protein is GTP 3',8-cyclase.